The chain runs to 486 residues: UDP-N-acetylmuramoyl-L-alanyl-D-glutamate--2,6-diaminopimelate ligase (486 aa).

S26 is a binding site for UDP-N-acetyl-alpha-D-muramoyl-L-alanyl-D-glutamate. 104–110 (GTNGKTS) is an ATP binding site. Residues 152–153 (TT), S179, Q185, and R187 each bind UDP-N-acetyl-alpha-D-muramoyl-L-alanyl-D-glutamate. K219 is modified (N6-carboxylysine). Meso-2,6-diaminopimelate-binding positions include R383, 407-410 (DNPR), G455, and E459. A Meso-diaminopimelate recognition motif motif is present at residues 407–410 (DNPR).

This sequence belongs to the MurCDEF family. MurE subfamily. Mg(2+) is required as a cofactor. Post-translationally, carboxylation is probably crucial for Mg(2+) binding and, consequently, for the gamma-phosphate positioning of ATP.

The protein resides in the cytoplasm. It carries out the reaction UDP-N-acetyl-alpha-D-muramoyl-L-alanyl-D-glutamate + meso-2,6-diaminopimelate + ATP = UDP-N-acetyl-alpha-D-muramoyl-L-alanyl-gamma-D-glutamyl-meso-2,6-diaminopimelate + ADP + phosphate + H(+). It functions in the pathway cell wall biogenesis; peptidoglycan biosynthesis. Functionally, catalyzes the addition of meso-diaminopimelic acid to the nucleotide precursor UDP-N-acetylmuramoyl-L-alanyl-D-glutamate (UMAG) in the biosynthesis of bacterial cell-wall peptidoglycan. This Caulobacter vibrioides (strain ATCC 19089 / CIP 103742 / CB 15) (Caulobacter crescentus) protein is UDP-N-acetylmuramoyl-L-alanyl-D-glutamate--2,6-diaminopimelate ligase.